Consider the following 152-residue polypeptide: MKLIASNKKAYFDYEILETLEAGLALLGSEVKALRQTRVNLKDNFVKIIKGEAFLFGVHISYLDTIHAYYKPNERRERKLLLHKKQLLKWQIEASKERLSIVGLKLYFNQRNRAKIQIALVKGKRLHDKRQSLKEKALNKEILADLKHHFKG.

This sequence belongs to the SmpB family.

It is found in the cytoplasm. Its function is as follows. Required for rescue of stalled ribosomes mediated by trans-translation. Binds to transfer-messenger RNA (tmRNA), required for stable association of tmRNA with ribosomes. tmRNA and SmpB together mimic tRNA shape, replacing the anticodon stem-loop with SmpB. tmRNA is encoded by the ssrA gene; the 2 termini fold to resemble tRNA(Ala) and it encodes a 'tag peptide', a short internal open reading frame. During trans-translation Ala-aminoacylated tmRNA acts like a tRNA, entering the A-site of stalled ribosomes, displacing the stalled mRNA. The ribosome then switches to translate the ORF on the tmRNA; the nascent peptide is terminated with the 'tag peptide' encoded by the tmRNA and targeted for degradation. The ribosome is freed to recommence translation, which seems to be the essential function of trans-translation. This chain is SsrA-binding protein, found in Helicobacter pylori (strain HPAG1).